The following is a 371-amino-acid chain: tRNA-specific 2-thiouridylase MnmA (371 aa).

ATP-binding positions include 13–20 (GMSGGVDS) and methionine 39. The interaction with target base in tRNA stretch occupies residues 99–101 (NPD). Cysteine 104 functions as the Nucleophile in the catalytic mechanism. Residues cysteine 104 and cysteine 200 are joined by a disulfide bond. ATP is bound at residue glycine 128. The interval 150-152 (KDQ) is interaction with tRNA. Residue cysteine 200 is the Cysteine persulfide intermediate of the active site. The interaction with tRNA stretch occupies residues 309–310 (RY).

Belongs to the MnmA/TRMU family.

It localises to the cytoplasm. The catalysed reaction is S-sulfanyl-L-cysteinyl-[protein] + uridine(34) in tRNA + AH2 + ATP = 2-thiouridine(34) in tRNA + L-cysteinyl-[protein] + A + AMP + diphosphate + H(+). Its function is as follows. Catalyzes the 2-thiolation of uridine at the wobble position (U34) of tRNA, leading to the formation of s(2)U34. This is tRNA-specific 2-thiouridylase MnmA from Bacillus subtilis (strain 168).